The chain runs to 498 residues: ATP synthase subunit beta, chloroplastic (498 aa).

Residue G172–T179 coordinates ATP.

Belongs to the ATPase alpha/beta chains family. In terms of assembly, F-type ATPases have 2 components, CF(1) - the catalytic core - and CF(0) - the membrane proton channel. CF(1) has five subunits: alpha(3), beta(3), gamma(1), delta(1), epsilon(1). CF(0) has four main subunits: a(1), b(1), b'(1) and c(9-12).

It is found in the plastid. It localises to the chloroplast thylakoid membrane. It carries out the reaction ATP + H2O + 4 H(+)(in) = ADP + phosphate + 5 H(+)(out). In terms of biological role, produces ATP from ADP in the presence of a proton gradient across the membrane. The catalytic sites are hosted primarily by the beta subunits. The sequence is that of ATP synthase subunit beta, chloroplastic from Phormium tenax (New Zealand flax).